The sequence spans 174 residues: Ferredoxin-thioredoxin reductase, variable chain, chloroplastic (174 aa).

The transit peptide at 1-62 (MTTGVAVMSS…RTRARLAICC (62 aa)) directs the protein to the chloroplast. Positions 69–81 (DSSTGFDSSSSSP) are enriched in low complexity. The segment at 69–89 (DSSTGFDSSSSSPPEEDEELK) is disordered. Phosphoserine occurs at positions 70 and 71.

The protein belongs to the ferredoxin thioredoxin reductase alpha subunit family. As to quaternary structure, heterodimer of subunit A (variable subunit) and subunit B (catalytic subunit). Heterodimeric FTR forms a complex with ferredoxin and thioredoxin.

Its subcellular location is the plastid. It localises to the chloroplast. In terms of biological role, variable subunit of the ferredoxin-thioredoxin reductase (FTR), which catalyzes the two-electron reduction of thioredoxins by the electrons provided by reduced ferredoxin. The sequence is that of Ferredoxin-thioredoxin reductase, variable chain, chloroplastic (FTRV) from Spinacia oleracea (Spinach).